Reading from the N-terminus, the 190-residue chain is Peptidyl-tRNA hydrolase (190 aa).

F14 is a binding site for tRNA. H19 (proton acceptor) is an active-site residue. Residues M64, N66, and N112 each coordinate tRNA.

This sequence belongs to the PTH family. In terms of assembly, monomer.

The protein localises to the cytoplasm. It catalyses the reaction an N-acyl-L-alpha-aminoacyl-tRNA + H2O = an N-acyl-L-amino acid + a tRNA + H(+). In terms of biological role, hydrolyzes ribosome-free peptidyl-tRNAs (with 1 or more amino acids incorporated), which drop off the ribosome during protein synthesis, or as a result of ribosome stalling. Functionally, catalyzes the release of premature peptidyl moieties from peptidyl-tRNA molecules trapped in stalled 50S ribosomal subunits, and thus maintains levels of free tRNAs and 50S ribosomes. The sequence is that of Peptidyl-tRNA hydrolase from Staphylococcus haemolyticus (strain JCSC1435).